A 290-amino-acid polypeptide reads, in one-letter code: Shikimate dehydrogenase (NADP(+)) (290 aa).

Shikimate contacts are provided by residues 22–24 and T68; that span reads SLS. K72 serves as the catalytic Proton acceptor. D84 contributes to the NADP(+) binding site. Residues N93 and D108 each contribute to the shikimate site. NADP(+)-binding positions include 133 to 137 and I228; that span reads GSGGS. Residue Y230 participates in shikimate binding. Residue G251 coordinates NADP(+).

The protein belongs to the shikimate dehydrogenase family. In terms of assembly, homodimer.

The enzyme catalyses shikimate + NADP(+) = 3-dehydroshikimate + NADPH + H(+). It participates in metabolic intermediate biosynthesis; chorismate biosynthesis; chorismate from D-erythrose 4-phosphate and phosphoenolpyruvate: step 4/7. Involved in the biosynthesis of the chorismate, which leads to the biosynthesis of aromatic amino acids. Catalyzes the reversible NADPH linked reduction of 3-dehydroshikimate (DHSA) to yield shikimate (SA). The chain is Shikimate dehydrogenase (NADP(+)) from Leptospira interrogans serogroup Icterohaemorrhagiae serovar Lai (strain 56601).